Here is a 257-residue protein sequence, read N- to C-terminus: 5-oxoprolinase subunit A (257 aa).

It belongs to the LamB/PxpA family. Forms a complex composed of PxpA, PxpB and PxpC.

It carries out the reaction 5-oxo-L-proline + ATP + 2 H2O = L-glutamate + ADP + phosphate + H(+). Catalyzes the cleavage of 5-oxoproline to form L-glutamate coupled to the hydrolysis of ATP to ADP and inorganic phosphate. In Halalkalibacterium halodurans (strain ATCC BAA-125 / DSM 18197 / FERM 7344 / JCM 9153 / C-125) (Bacillus halodurans), this protein is 5-oxoprolinase subunit A.